We begin with the raw amino-acid sequence, 184 residues long: ATP synthase subunit b, chloroplastic (184 aa).

Residues 27-49 traverse the membrane as a helical segment; it reads LATNPINLSVVLGVLIFFGKGVL.

This sequence belongs to the ATPase B chain family. As to quaternary structure, F-type ATPases have 2 components, F(1) - the catalytic core - and F(0) - the membrane proton channel. F(1) has five subunits: alpha(3), beta(3), gamma(1), delta(1), epsilon(1). F(0) has four main subunits: a(1), b(1), b'(1) and c(10-14). The alpha and beta chains form an alternating ring which encloses part of the gamma chain. F(1) is attached to F(0) by a central stalk formed by the gamma and epsilon chains, while a peripheral stalk is formed by the delta, b and b' chains.

It is found in the plastid. It localises to the chloroplast thylakoid membrane. F(1)F(0) ATP synthase produces ATP from ADP in the presence of a proton or sodium gradient. F-type ATPases consist of two structural domains, F(1) containing the extramembraneous catalytic core and F(0) containing the membrane proton channel, linked together by a central stalk and a peripheral stalk. During catalysis, ATP synthesis in the catalytic domain of F(1) is coupled via a rotary mechanism of the central stalk subunits to proton translocation. Its function is as follows. Component of the F(0) channel, it forms part of the peripheral stalk, linking F(1) to F(0). The chain is ATP synthase subunit b, chloroplastic from Phalaenopsis aphrodite subsp. formosana (Moth orchid).